A 679-amino-acid chain; its full sequence is Glycine--tRNA ligase beta subunit (679 aa).

This sequence belongs to the class-II aminoacyl-tRNA synthetase family. As to quaternary structure, tetramer of two alpha and two beta subunits.

It is found in the cytoplasm. The catalysed reaction is tRNA(Gly) + glycine + ATP = glycyl-tRNA(Gly) + AMP + diphosphate. The chain is Glycine--tRNA ligase beta subunit from Streptococcus pyogenes serotype M2 (strain MGAS10270).